Consider the following 320-residue polypeptide: Eukaryotic translation initiation factor 3 subunit G (320 aa).

A disordered region spans residues 1 to 25 (MPTGDFDSKPSWADQVEEEGEDDKC). 2 positions are modified to phosphoserine: serine 8 and serine 11. Phosphothreonine is present on residues threonine 38 and threonine 41. Phosphoserine is present on residues serine 42, serine 189, serine 223, and serine 264. The disordered stretch occupies residues 209–234 (KTGKYVPPSLRDGASRRGESMQPNRR). Residues 221–234 (GASRRGESMQPNRR) show a composition bias toward basic and acidic residues. Residues 239-317 (ATIRVTNLSE…LILNVEWAKP (79 aa)) enclose the RRM domain.

The protein belongs to the eIF-3 subunit G family. As to quaternary structure, component of the eukaryotic translation initiation factor 3 (eIF-3) complex, which is composed of 13 subunits: EIF3A, EIF3B, EIF3C, EIF3D, EIF3E, EIF3F, EIF3G, EIF3H, EIF3I, EIF3J, EIF3K, EIF3L and EIF3M. The eIF-3 complex appears to include 3 stable modules: module A is composed of EIF3A, EIF3B, EIF3G and EIF3I; module B is composed of EIF3F, EIF3H, and EIF3M; and module C is composed of EIF3C, EIF3D, EIF3E, EIF3K and EIF3L. EIF3C of module C binds EIF3B of module A and EIF3H of module B, thereby linking the three modules. EIF3J is a labile subunit that binds to the eIF-3 complex via EIF3B. The eIF-3 complex interacts with RPS6KB1 under conditions of nutrient depletion. Mitogenic stimulation leads to binding and activation of a complex composed of FRAP1 and RAPTOR, leading to phosphorylation and release of RPS6KB1 and binding of EIF4B to eIF-3. Interacts (via C-terminus) with AIFM1 (via N-terminus). Interacts with DHX33; the interaction is independent of RNA. Phosphorylated. Phosphorylation is enhanced upon serum stimulation.

It is found in the cytoplasm. The protein resides in the nucleus. It localises to the perinuclear region. RNA-binding component of the eukaryotic translation initiation factor 3 (eIF-3) complex, which is required for several steps in the initiation of protein synthesis. The eIF-3 complex associates with the 40S ribosome and facilitates the recruitment of eIF-1, eIF-1A, eIF-2:GTP:methionyl-tRNAi and eIF-5 to form the 43S pre-initiation complex (43S PIC). The eIF-3 complex stimulates mRNA recruitment to the 43S PIC and scanning of the mRNA for AUG recognition. The eIF-3 complex is also required for disassembly and recycling of post-termination ribosomal complexes and subsequently prevents premature joining of the 40S and 60S ribosomal subunits prior to initiation. The eIF-3 complex specifically targets and initiates translation of a subset of mRNAs involved in cell proliferation, including cell cycling, differentiation and apoptosis, and uses different modes of RNA stem-loop binding to exert either translational activation or repression. This subunit can bind 18S rRNA. In Bos taurus (Bovine), this protein is Eukaryotic translation initiation factor 3 subunit G.